The chain runs to 361 residues: Cyclin-dependent kinase 10 (361 aa).

The Protein kinase domain maps to 37–321; the sequence is FEKLNRIGEG…AGDCLESSYF (285 aa). ATP is bound by residues 43-51 and K66; that span reads IGEGTYGIV. The active-site Proton acceptor is D161. T194 carries the phosphothreonine modification. The tract at residues 332–361 is disordered; the sequence is LMPTFPHHRNKRATPATSLGTESQSRRGRP.

Belongs to the protein kinase superfamily. CMGC Ser/Thr protein kinase family. CDC2/CDKX subfamily. As to quaternary structure, heterodimer with CCNQ, the interaction is required for kinase activity. Interacts with ETS2. Interacts with PRK2.

The protein resides in the cytoplasm. It localises to the cytoskeleton. Its subcellular location is the cilium basal body. It carries out the reaction L-seryl-[protein] + ATP = O-phospho-L-seryl-[protein] + ADP + H(+). The enzyme catalyses L-threonyl-[protein] + ATP = O-phospho-L-threonyl-[protein] + ADP + H(+). Functionally, cyclin-dependent kinase that phosphorylates the transcription factor ETS2 (in vitro) and positively controls its proteasomal degradation (in cells). Involved in the regulation of actin cytoskeleton organization through the phosphorylation of actin dynamics regulators such as PKN2. Is a negative regulator of ciliogenesis through phosphorylation of PKN2 and promotion of RhoA signaling. In Bos taurus (Bovine), this protein is Cyclin-dependent kinase 10 (CDK10).